The primary structure comprises 145 residues: Arginine repressor (145 aa).

It belongs to the ArgR family.

It is found in the cytoplasm. It functions in the pathway amino-acid biosynthesis; L-arginine biosynthesis [regulation]. In terms of biological role, regulates arginine biosynthesis genes. In Streptococcus mutans serotype c (strain ATCC 700610 / UA159), this protein is Arginine repressor.